The sequence spans 335 residues: 2-keto-3-deoxygluconate permease (335 aa).

A run of 10 helical transmembrane segments spans residues 10–30 (IPGG…TAAP), 42–62 (GIIT…GASI), 77–97 (LVLT…QLLP), 100–120 (GIEV…AMDM), 141–161 (AFVL…LGSA), 163–183 (LASF…IGFA), 200–220 (QTLI…GVIL), 224–244 (LLGI…LIIA), 254–274 (TAGL…VIIA), and 289–309 (ALVA…TAMY).

Belongs to the KdgT transporter family.

The protein resides in the cell inner membrane. The enzyme catalyses 2-dehydro-3-deoxy-D-gluconate(in) + H(+)(in) = 2-dehydro-3-deoxy-D-gluconate(out) + H(+)(out). Catalyzes the proton-dependent uptake of 2-keto-3-deoxygluconate (KDG) into the cell. This Tolumonas auensis (strain DSM 9187 / NBRC 110442 / TA 4) protein is 2-keto-3-deoxygluconate permease.